Consider the following 691-residue polypeptide: Elongation factor G (691 aa).

The 275-residue stretch at 8 to 282 folds into the tr-type G domain; it reads ERVRNIGIAA…AVVNYLPAPV (275 aa). GTP contacts are provided by residues 17–24, 81–85, and 135–138; these read AHIDAGKT, DTPGH, and NKMD.

It belongs to the TRAFAC class translation factor GTPase superfamily. Classic translation factor GTPase family. EF-G/EF-2 subfamily.

It is found in the cytoplasm. Catalyzes the GTP-dependent ribosomal translocation step during translation elongation. During this step, the ribosome changes from the pre-translocational (PRE) to the post-translocational (POST) state as the newly formed A-site-bound peptidyl-tRNA and P-site-bound deacylated tRNA move to the P and E sites, respectively. Catalyzes the coordinated movement of the two tRNA molecules, the mRNA and conformational changes in the ribosome. This chain is Elongation factor G, found in Prochlorococcus marinus (strain NATL2A).